A 515-amino-acid polypeptide reads, in one-letter code: Bifunctional purine biosynthesis protein PurH (515 aa).

Residues 1-145 (MTKRVLISVS…KNHASVTVVV (145 aa)) form the MGS-like domain.

Belongs to the PurH family.

The enzyme catalyses (6R)-10-formyltetrahydrofolate + 5-amino-1-(5-phospho-beta-D-ribosyl)imidazole-4-carboxamide = 5-formamido-1-(5-phospho-D-ribosyl)imidazole-4-carboxamide + (6S)-5,6,7,8-tetrahydrofolate. The catalysed reaction is IMP + H2O = 5-formamido-1-(5-phospho-D-ribosyl)imidazole-4-carboxamide. The protein operates within purine metabolism; IMP biosynthesis via de novo pathway; 5-formamido-1-(5-phospho-D-ribosyl)imidazole-4-carboxamide from 5-amino-1-(5-phospho-D-ribosyl)imidazole-4-carboxamide (10-formyl THF route): step 1/1. It participates in purine metabolism; IMP biosynthesis via de novo pathway; IMP from 5-formamido-1-(5-phospho-D-ribosyl)imidazole-4-carboxamide: step 1/1. This chain is Bifunctional purine biosynthesis protein PurH, found in Streptococcus pneumoniae (strain P1031).